Consider the following 220-residue polypeptide: Adenylate kinase (220 aa).

Position 12 to 17 (12 to 17 (GAGKGT)) interacts with ATP. Positions 32 to 62 (STGDIFRDIVKKENDELGKKIKEIMERGELV) are NMP. Residues T33, R38, 60–62 (ELV), 88–91 (GYPR), and Q95 each bind AMP. An LID region spans residues 129 to 166 (ARRICPKCGRIYNLISLPPKEDELCDDCKVKLVQREDD). Residue R130 participates in ATP binding. Positions 133 and 136 each coordinate Zn(2+). Position 139–140 (139–140 (IY)) interacts with ATP. Zn(2+) is bound by residues C153 and C156. Residues R163 and R174 each contribute to the AMP site. An ATP-binding site is contributed by I202.

It belongs to the adenylate kinase family. In terms of assembly, monomer.

The protein localises to the cytoplasm. The enzyme catalyses AMP + ATP = 2 ADP. The protein operates within purine metabolism; AMP biosynthesis via salvage pathway; AMP from ADP: step 1/1. Its function is as follows. Catalyzes the reversible transfer of the terminal phosphate group between ATP and AMP. Plays an important role in cellular energy homeostasis and in adenine nucleotide metabolism. The chain is Adenylate kinase from Thermotoga petrophila (strain ATCC BAA-488 / DSM 13995 / JCM 10881 / RKU-1).